A 503-amino-acid polypeptide reads, in one-letter code: Probable cytosol aminopeptidase (503 aa).

Mn(2+) is bound by residues lysine 274 and aspartate 279. Lysine 286 is an active-site residue. Mn(2+) is bound by residues aspartate 297, aspartate 356, and glutamate 358. The active site involves arginine 360.

This sequence belongs to the peptidase M17 family. It depends on Mn(2+) as a cofactor.

The protein resides in the cytoplasm. It catalyses the reaction Release of an N-terminal amino acid, Xaa-|-Yaa-, in which Xaa is preferably Leu, but may be other amino acids including Pro although not Arg or Lys, and Yaa may be Pro. Amino acid amides and methyl esters are also readily hydrolyzed, but rates on arylamides are exceedingly low.. It carries out the reaction Release of an N-terminal amino acid, preferentially leucine, but not glutamic or aspartic acids.. In terms of biological role, presumably involved in the processing and regular turnover of intracellular proteins. Catalyzes the removal of unsubstituted N-terminal amino acids from various peptides. The protein is Probable cytosol aminopeptidase of Burkholderia orbicola (strain AU 1054).